A 258-amino-acid chain; its full sequence is 5'-nucleotidase SurE (258 aa).

Residues D18, D19, S49, and N102 each contribute to the a divalent metal cation site.

It belongs to the SurE nucleotidase family. A divalent metal cation is required as a cofactor.

It localises to the cytoplasm. It catalyses the reaction a ribonucleoside 5'-phosphate + H2O = a ribonucleoside + phosphate. Its function is as follows. Nucleotidase that shows phosphatase activity on nucleoside 5'-monophosphates. The polypeptide is 5'-nucleotidase SurE (Vibrio campbellii (strain ATCC BAA-1116)).